A 203-amino-acid polypeptide reads, in one-letter code: MMPTIASIALVLLAYLSGSIPFSLLVARAWGVDLRVSGSGNVGAANVWRTCGFSAFALAMGGDMLKGALPTIAAQALGLSPLAVVIVGTAAMLGHTRSIFLGFRGGKAVATGGGVVLTLAPLVALPGLAAWAVTFGITRISAVASLTAAAVCGIAAAVLLALGMLPPAYAIFVWGAVAAIVFLHRSNIHRLRTGTENRFEKLF.

A run of 6 helical transmembrane segments spans residues 5–25 (IASI…FSLL), 50–70 (TCGF…GALP), 72–92 (IAAQ…TAAM), 115–135 (VVLT…AVTF), 140–160 (ISAV…AVLL), and 162–182 (LGML…AIVF).

This sequence belongs to the PlsY family. Probably interacts with PlsX.

It localises to the cell membrane. It catalyses the reaction an acyl phosphate + sn-glycerol 3-phosphate = a 1-acyl-sn-glycero-3-phosphate + phosphate. It functions in the pathway lipid metabolism; phospholipid metabolism. In terms of biological role, catalyzes the transfer of an acyl group from acyl-phosphate (acyl-PO(4)) to glycerol-3-phosphate (G3P) to form lysophosphatidic acid (LPA). This enzyme utilizes acyl-phosphate as fatty acyl donor, but not acyl-CoA or acyl-ACP. In Roseiflexus sp. (strain RS-1), this protein is Glycerol-3-phosphate acyltransferase.